Consider the following 339-residue polypeptide: Uroporphyrinogen decarboxylase (339 aa).

Substrate contacts are provided by residues 21–25, aspartate 71, tyrosine 147, serine 202, and histidine 315; that span reads RQAGR.

Belongs to the uroporphyrinogen decarboxylase family. Homodimer.

Its subcellular location is the cytoplasm. The catalysed reaction is uroporphyrinogen III + 4 H(+) = coproporphyrinogen III + 4 CO2. It functions in the pathway porphyrin-containing compound metabolism; protoporphyrin-IX biosynthesis; coproporphyrinogen-III from 5-aminolevulinate: step 4/4. In terms of biological role, catalyzes the decarboxylation of four acetate groups of uroporphyrinogen-III to yield coproporphyrinogen-III. The polypeptide is Uroporphyrinogen decarboxylase (Helicobacter pylori (strain HPAG1)).